A 245-amino-acid polypeptide reads, in one-letter code: MIMSSYLINSNYIEPSFPPCEEYHQNGYMPVSSDYYERPKDPGFPHHEEASYPRSNYQEQSYDYGNVSTNDLNDFSDRHHAQPQSVSQNHGPRLTTESCVGSDGNKDCSLVSDALPGSQKSKEPVVYPWMKKVHVNTVTASYSGGVPKRSRTAYTRQQALELEKEFHFNRYLTRRRRVEIAHTMCLSERQVKIWFQNRRMKWKKDHKLPNTKIRSSSSAPSNHHVKTDATQQQQTLLPTPCSSNL.

Positions 34–99 are disordered; that stretch reads DYYERPKDPG…HGPRLTTESC (66 aa). Basic and acidic residues predominate over residues 35-51; the sequence is YYERPKDPGFPHHEEAS. Composition is skewed to polar residues over residues 53–73 and 82–99; these read PRSNYQEQSYDYGNVSTNDLN and QPQSVSQNHGPRLTTESC. Positions 126–131 match the Antp-type hexapeptide motif; that stretch reads VYPWMK. Positions 147 to 206 form a DNA-binding region, homeobox; that stretch reads PKRSRTAYTRQQALELEKEFHFNRYLTRRRRVEIAHTMCLSERQVKIWFQNRRMKWKKDH. The segment at 205–245 is disordered; sequence DHKLPNTKIRSSSSAPSNHHVKTDATQQQQTLLPTPCSSNL. Positions 212-221 are enriched in polar residues; sequence KIRSSSSAPS. Low complexity predominate over residues 230-245; the sequence is TQQQQTLLPTPCSSNL.

This sequence belongs to the Antp homeobox family. Deformed subfamily.

It is found in the nucleus. Its function is as follows. Sequence-specific transcription factor which is part of a developmental regulatory system that provides cells with specific positional identities on the anterior-posterior axis. The chain is Homeobox protein Hox-A4a (hoxa4a) from Danio rerio (Zebrafish).